We begin with the raw amino-acid sequence, 338 residues long: Holliday junction branch migration complex subunit RuvB (338 aa).

The segment at 1–182 (MDDRMVDQSQ…FGVHLRLEYY (182 aa)) is large ATPase domain (RuvB-L). ATP is bound by residues L21, R22, G63, K66, T67, T68, 129–131 (EDF), R172, Y182, and R219. Residue T67 participates in Mg(2+) binding. The segment at 183-253 (KESELKDIII…TTKRALQLLQ (71 aa)) is small ATPAse domain (RuvB-S). The head domain (RuvB-H) stretch occupies residues 256–338 (DYGLDYIDHK…KNGKRDNFEY (83 aa)). 3 residues coordinate DNA: R292, R311, and R316.

This sequence belongs to the RuvB family. In terms of assembly, homohexamer. Forms an RuvA(8)-RuvB(12)-Holliday junction (HJ) complex. HJ DNA is sandwiched between 2 RuvA tetramers; dsDNA enters through RuvA and exits via RuvB. An RuvB hexamer assembles on each DNA strand where it exits the tetramer. Each RuvB hexamer is contacted by two RuvA subunits (via domain III) on 2 adjacent RuvB subunits; this complex drives branch migration. In the full resolvosome a probable DNA-RuvA(4)-RuvB(12)-RuvC(2) complex forms which resolves the HJ.

The protein localises to the cytoplasm. The catalysed reaction is ATP + H2O = ADP + phosphate + H(+). Functionally, the RuvA-RuvB-RuvC complex processes Holliday junction (HJ) DNA during genetic recombination and DNA repair, while the RuvA-RuvB complex plays an important role in the rescue of blocked DNA replication forks via replication fork reversal (RFR). RuvA specifically binds to HJ cruciform DNA, conferring on it an open structure. The RuvB hexamer acts as an ATP-dependent pump, pulling dsDNA into and through the RuvAB complex. RuvB forms 2 homohexamers on either side of HJ DNA bound by 1 or 2 RuvA tetramers; 4 subunits per hexamer contact DNA at a time. Coordinated motions by a converter formed by DNA-disengaged RuvB subunits stimulates ATP hydrolysis and nucleotide exchange. Immobilization of the converter enables RuvB to convert the ATP-contained energy into a lever motion, pulling 2 nucleotides of DNA out of the RuvA tetramer per ATP hydrolyzed, thus driving DNA branch migration. The RuvB motors rotate together with the DNA substrate, which together with the progressing nucleotide cycle form the mechanistic basis for DNA recombination by continuous HJ branch migration. Branch migration allows RuvC to scan DNA until it finds its consensus sequence, where it cleaves and resolves cruciform DNA. This chain is Holliday junction branch migration complex subunit RuvB, found in Staphylococcus carnosus (strain TM300).